The following is a 781-amino-acid chain: Catenin beta-1 (781 aa).

A disordered region spans residues 34–56 (GIHSGATTTAPSLSGKGNPEDED). ARM repeat units follow at residues 141-180 (NYQD…QLSK), 225-264 (REGL…NLLL), 267-306 (EGAK…ILAY), 351-390 (SSNK…NLSD), 391-429 (AATK…NLTC), 432-473 (YKNK…HLTS), 479-519 (EMAQ…NLAL), 521-562 (PANH…QFVE), 584-623 (IHNR…DVAQ), and 625-664 (KEAA…RMSE). Positions 735 to 745 (MDHDMGGHHPG) are enriched in basic and acidic residues. Residues 735–781 (MDHDMGGHHPGADYPVDGLPDLSHAQDLMDGLPPGDSNQLAWFDTDL) form a disordered region.

The protein belongs to the beta-catenin family. In terms of assembly, interacts with EP-Cadherin/CDH3. Interacts with custos; the interaction is positively regulated by Wnt stimulation. Phosphorylation by gsk3b promotes ubiquitination and subsequent degradation by the proteasome. In terms of processing, ubiquitinated when phosphorylated by gsk3b, leading to its degradation. As to expression, expressed at intercalated disks in the heart (at protein level).

It is found in the cytoplasm. The protein resides in the nucleus. The protein localises to the cell membrane. Functionally, key downstream component of the canonical Wnt signaling pathway. In the absence of Wnt, forms a complex with axin1, axin2, apc, csnk1a1 and gsk3b that promotes phosphorylation on N-terminal Ser and Thr residues and ubiquitination of ctnnb1 and its subsequent degradation by the proteasome. In the presence of Wnt ligand, ctnnb1 is not ubiquitinated and accumulates in the nucleus, where it acts as a coactivator for transcription factors of the TCF/LEF family, leading to activate Wnt responsive genes. Plays a key role in dorsoventral patterning: in prospective ventral blastomeres, its down-regulation by axin1 and axin2 leads to inhibit the Wnt signaling pathway, while in prospective dorsal blastomeres, degradation of axin results in stabilization and nuclear translocation of ctnnb1. This Xenopus laevis (African clawed frog) protein is Catenin beta-1.